A 673-amino-acid chain; its full sequence is UvrABC system protein B (673 aa).

A Helicase ATP-binding domain is found at 28 to 414 (ASILQNKRSQ…EAGGEIVEQL (387 aa)). 41 to 48 (GITGSGKT) contributes to the ATP binding site. Residues 94–117 (YYDYYQPEAYVPRTDTYIEKDMSI) carry the Beta-hairpin motif. The Helicase C-terminal domain occupies 433-595 (QVDDCLAEIR…ITPRTVKREI (163 aa)). The UVR domain occupies 633 to 668 (RLKIKECEKEMKKAAKEFRFEEAADWRDQMRRYQQI).

Belongs to the UvrB family. As to quaternary structure, forms a heterotetramer with UvrA during the search for lesions. Interacts with UvrC in an incision complex.

Its subcellular location is the cytoplasm. Functionally, the UvrABC repair system catalyzes the recognition and processing of DNA lesions. A damage recognition complex composed of 2 UvrA and 2 UvrB subunits scans DNA for abnormalities. Upon binding of the UvrA(2)B(2) complex to a putative damaged site, the DNA wraps around one UvrB monomer. DNA wrap is dependent on ATP binding by UvrB and probably causes local melting of the DNA helix, facilitating insertion of UvrB beta-hairpin between the DNA strands. Then UvrB probes one DNA strand for the presence of a lesion. If a lesion is found the UvrA subunits dissociate and the UvrB-DNA preincision complex is formed. This complex is subsequently bound by UvrC and the second UvrB is released. If no lesion is found, the DNA wraps around the other UvrB subunit that will check the other stand for damage. This chain is UvrABC system protein B, found in Protochlamydia amoebophila (strain UWE25).